Consider the following 161-residue polypeptide: 2-C-methyl-D-erythritol 2,4-cyclodiphosphate synthase (161 aa).

Positions 10 and 12 each coordinate a divalent metal cation. 4-CDP-2-C-methyl-D-erythritol 2-phosphate is bound by residues 10–12 (DVH) and 36–37 (HS). His-44 is a binding site for a divalent metal cation. Residues 58-60 (DIG), 63-67 (FSDTD), and Arg-144 each bind 4-CDP-2-C-methyl-D-erythritol 2-phosphate.

Belongs to the IspF family. As to quaternary structure, homotrimer. It depends on a divalent metal cation as a cofactor.

It carries out the reaction 4-CDP-2-C-methyl-D-erythritol 2-phosphate = 2-C-methyl-D-erythritol 2,4-cyclic diphosphate + CMP. It participates in isoprenoid biosynthesis; isopentenyl diphosphate biosynthesis via DXP pathway; isopentenyl diphosphate from 1-deoxy-D-xylulose 5-phosphate: step 4/6. Involved in the biosynthesis of isopentenyl diphosphate (IPP) and dimethylallyl diphosphate (DMAPP), two major building blocks of isoprenoid compounds. Catalyzes the conversion of 4-diphosphocytidyl-2-C-methyl-D-erythritol 2-phosphate (CDP-ME2P) to 2-C-methyl-D-erythritol 2,4-cyclodiphosphate (ME-CPP) with a corresponding release of cytidine 5-monophosphate (CMP). The polypeptide is 2-C-methyl-D-erythritol 2,4-cyclodiphosphate synthase (Burkholderia ambifaria (strain ATCC BAA-244 / DSM 16087 / CCUG 44356 / LMG 19182 / AMMD) (Burkholderia cepacia (strain AMMD))).